The following is a 286-amino-acid chain: 4-hydroxybenzoate octaprenyltransferase (286 aa).

Transmembrane regions (helical) follow at residues 22 to 42 (IGTL…SAGV), 45 to 65 (FSLL…GCVI), 90 to 110 (LTAV…FVLV), 113 to 133 (LNQF…IYPF), 142 to 162 (QVVL…AVVG), 169 to 189 (WLLF…YAMV), 212 to 232 (LYIA…GWLE), 236 to 256 (VSYY…QWLI), and 265 to 285 (FRAF…IMLA).

Belongs to the UbiA prenyltransferase family. Mg(2+) is required as a cofactor.

It localises to the cell inner membrane. It catalyses the reaction all-trans-octaprenyl diphosphate + 4-hydroxybenzoate = 4-hydroxy-3-(all-trans-octaprenyl)benzoate + diphosphate. It participates in cofactor biosynthesis; ubiquinone biosynthesis. Catalyzes the prenylation of para-hydroxybenzoate (PHB) with an all-trans polyprenyl group. Mediates the second step in the final reaction sequence of ubiquinone-8 (UQ-8) biosynthesis, which is the condensation of the polyisoprenoid side chain with PHB, generating the first membrane-bound Q intermediate 3-octaprenyl-4-hydroxybenzoate. This Tolumonas auensis (strain DSM 9187 / NBRC 110442 / TA 4) protein is 4-hydroxybenzoate octaprenyltransferase.